Reading from the N-terminus, the 435-residue chain is Serine/threonine-protein kinase 40 (435 aa).

The segment covering methionine 1–alanine 10 has biased composition (basic and acidic residues). Positions methionine 1–serine 25 are disordered. The region spanning phenylalanine 35 to isoleucine 331 is the Protein kinase domain. Residues leucine 41–isoleucine 49 and lysine 66 contribute to the ATP site. Residue arginine 196 is the Proton acceptor of the active site.

It belongs to the protein kinase superfamily. CAMK Ser/Thr protein kinase family. Strongly expressed in heart, brain, placenta, lung, skeletal muscle, kidney, spleen, thymus, prostate, liver, pancreas, testis, ovary, small intestine, colon and peripheral blood leukocytes.

It localises to the nucleus. Its subcellular location is the cytoplasm. It catalyses the reaction L-seryl-[protein] + ATP = O-phospho-L-seryl-[protein] + ADP + H(+). The catalysed reaction is L-threonyl-[protein] + ATP = O-phospho-L-threonyl-[protein] + ADP + H(+). May be a negative regulator of NF-kappa-B and p53-mediated gene transcription. The sequence is that of Serine/threonine-protein kinase 40 (STK40) from Homo sapiens (Human).